The following is a 415-amino-acid chain: Multidrug resistance protein MdtA (415 aa).

The first 21 residues, 1–21 (MKGSYKSRWVIVIVVVIAAIA), serve as a signal peptide directing secretion. Residues 31-47 (DSQSAAPGATKQAQQSP) are compositionally biased toward polar residues. Disordered regions lie at residues 31-60 (DSQS…GPLA) and 392-415 (EAQS…GARS). A compositionally biased stretch (basic and acidic residues) spans 399–415 (PEEKATSREYAKKGARS).

It belongs to the membrane fusion protein (MFP) (TC 8.A.1) family. As to quaternary structure, part of a tripartite efflux system composed of MdtA, MdtB and MdtC.

The protein localises to the cell inner membrane. The MdtABC tripartite complex confers resistance against novobiocin and deoxycholate. This chain is Multidrug resistance protein MdtA, found in Escherichia coli O8 (strain IAI1).